The chain runs to 4367 residues: MMDSVPSPPPQPSPDANGVATTPFAAVDPVKVVDHLVLLLEATLGAKRDELEAPGSLLSKVRYSDTVQRCSRFALDTQVALYIQKDLAPTTTLDGDNGAEAEEPEPTHVYTISSDLTSSPTTVAYLVLLKRPQPLDPIVPLTSQIQMLNLPGPAYLSTSGSEQGPTSSPYEILQLYLHNGLAPYFDASTKSQQLLNGARGRPDVDAKTGIPVTKKRWTELELSLSHLQQNVEIPEVSLPFHPLVQSTLEEAATKNVKPSIDLLPATVLADSTFLNNLQATVNNWIKSIQVITKMTRDPTTGTANQEINFWLSMEAALEGIENQLRSEGVMLTLDILKHAKRFQATVSFTADTGLKEAMEKVQKYNQLMRDFPLDELLSATTLTKVQESIGQIFGHLNKKLRICPYPIRRALPLVEAISGDLDEVLHRLLPGTELVKLDYEEFKGVMKQAGSIFRAWDESIKEFTNVAREVTRRRNEKFIPIKINPRHAELQSRLDYVHNFRDNHEQLQRTIINVLGPKATVNGIVTASGANGVAVVEEIGDVDAVDEVKQAWEALKDVDLLDCTREGTEKWVRAENIYNERTARVENSIIARLRDRLATAKNANEMFRVFSKFNALFVRPKIRGAIAEYQTQLIDNVKQAISSLHERFKQQYGHSEAHAMAQLHDLPPVSGAIIWARQIERQLDQYMKKVEQVLGSDWALHTEGQKLQNESDLFRKKLDTRPIFEAWLHDVQRKQISISGLLFTINRIRSAGNILELAVNFDAQVIALFKETRNLLWLNYPVPHSVNNVAKEAKRVYPFAVSLMESVRTFAQTNRQISDMSEVAVLLSGHRNDVYTLISKGIPLRWETFVNTYEVHFKPTFNPNTPLGQTGSKVSETKHVMFIREFAASVSLLQSKTLLLANIYVTVQKALNELKTCPYEASAFQSRLETIQHAVDQLNLEQYVNLGYWVERMNRQIKDVLYTRLQVAIQAWIQAFEDEDVERPSERKRLLEIASPDAAKSIGPVIKSLVHEITMRNQVIYLDPPLEYARASWFAQLQDWIGVICNLKKIKATRYTMSLSTEVVDEPRFNDLPGDCTEELLRVQTSVEKKIREIGAYVDKWLQFQSLWDLQSEHVYDVLGDQLSRWLQLLQEIRKTRQTFDTTEVSRSFGHITIDYDQVQTKVNAKYDQWQQDILIKFASRLGNRMREVYAELEKARKDLEGQAMTANSTAEAVRFITIVQSCTRQVKLWAPEIETFRQGESTLVRQRYHFQNDWLHAEQVDGMWDMLNELLARKSKIVTDQSDALRAKITAEDKVVNDKIAEIAHQWNEEKPVSGTIAPDVASATLTHFEQRITKLQEESAMVAKAKEALDLAPTPDTSLGVILEEVQDFKSVWASLSTIWKNLNELRETLWNSVQPRKIRASIDNLIKMTKEMPSRMRQYAAFEHIQNVLRQLMKVNSILGELKSEAVRDRHWTKIYKQIKPGKRYSPVSMTLGDVWDLNLVATEVIVKDIIIQAQGEMALEEFLKQVRETWTNYGLELVQYQQKCRLIRGWDDLFAKCSENLNSLQAMKHSPYYKEFEEEASSWEEKLNRVHVLFDIWIDVQRQWVYLEGVFHGNADIKHLLPIESSRFQNINSEFLAVMKKVYKQPNVLDVLNIPNVQKSLERLAELLNKIQKALGEYLEKERVSFPRFYFVGDEDLLEMIGNSNDTMRIAKHFKKMFAGLNGLVMDDEGVISGFTSKEGETVRLKKEINLVKTPRINDWLALLENGMKVTLAELLAEAVDEFTPIFSSENVDRDALIKFMNTYPSQIVVLATQVVWTTAVDQALADGGKDLQLLFDREVQVLRMLADTVLGDLEVLLRKKCEQLITECVHQRDVIEKLVKLNANSNTHYMWLLQMRYVYNPEGDFLQRLHIKMANAKLNYGFEYLGVPDRLVRTPLTDRCFLTLTQALCQRLGGSPYGPAGTGKTESVKALGLQLGRFTLVFCCDDTFDNQAMGRIFLGICQVGAWGCFDEFNRLEEKILSAVSQQIQDIQLGLKMGAEDEKAQIELDGRQIHVNANAGIFITMNPGYAGRSNLPDNLKKLFRSVAMSKPDKELIAEVMLYSQGFNQAKQLSKHTVPFFDQCSEKLSKQAHYDFGLRALKSVLVSSGGLKRARLLETGDAESLGPEDVVEPEIIVQSIRETIAPKLIKSDVEIMMEIESVCFPGVKYVPASLEKLQEAIRRLAAERQLVVNDIWMTKVLQLYQIQKIHHGVMMVGNSGSGKSAAWRLLLDALQQTENVEGVSHVIDSKVMSKEALYGNLDSTTREWTDGLFTSILRKIVDNLRGEDAKRHWIVFDGDVDPEWVENLNSVLDDNKLLTLPNGERLNLPPNVRIMFEVENLKYATLATVSRCGMVWFSEDTVTPDMMVSNYIETLRTVAFEDLDEDAVATGQSSAKALAVQSQAADLLQEFLTRDNLINEVLKEAANYEHIMEFTVARVLSTLFSLLNKAVRDIIEYNSAHVDFPMDPEQVEGYIAKKVLLALVWALTGDCPLKDRKAFGDKVAGLASFGSPPLDGTSSLIDFTVTMPQGEWQTWQQHVPTIEVNTHSVTQTDVVIPTLDTIRHEDVLYSWLAEHKPLLLCGPPGSGKTMTLFSALRKLPNMEVVGLNFSSATTPDLLIKTFEQYCEYKKTLNGVMLSPTQIGRWLVIFCDEINLPAPDKYGTQRAISFLRQLVEHNGFWRTSDKAWVTLDRIQFVGACNPPTDAGRTPMGARFLRHAPLIMVDYPGELSLMQIYGSFNAAVLKVIPSLRGYAEALTQAMVRFYLESQERFTPKIQPHYVYSPRELTRWVRGVYEAIRPLETLSVEGLIRIWAHEALRLFQDRLVDEEERKWTDDAVRRIAMEYFPTIDEHKALGGPILFSNWLSKNYVPVDREQLRDFVKARLKTFCEEEVDVPLILFNDVLEHVLRIDRVFRQPQGHLILIGVSGSGKTTLSRFVAWMNGLKVFQIKVHGKYSAEDFDEDLREVLRRCGCKGEKICFIMDESNVLDSGFLERMNTLLANAEVPGLFEGDDLAALMTACKEGAQRQGLLLDSQEELYKWFTGQIVKNLHVVFTMNPPGEDGLSSKAATSPALFNRCVLNWFGDWSDQALFQVAHELTHSVDLDRPNWTAPDTIPVAYRGLNLPPSHREAVVNAMVYIHYSLQRFNAKLLKQQGKITFLTPRHFLDFVAQYVKLYNEKREDLEEQQRHLNVGLEKLRDTVDKVRDLRVTLSEKKAQLEQKDAEANEKLQRMVADQREAEQRKNISLEIQAALEKQEAEVASRKKVVLEDLARAEPAVEEAKASVSSIKRQHLTEVRSMPTPPSGVKLALESVCTLIGHKANDWKTIQGIVRRDDFIASIVNFNNEKQMTKSLRVKMRNEFLANPEFTFEKVNRASKACGPLVQWVEAQVNYAEILDRVGPLREEVMLLEEQALQTKAEAKAVEQTISTLENSIARYKTEYAALISETQAIKAEMSRVQFKVDRSVKLLDSLSSERTRWEEGSRSFETQISTLVGDVLVAAAFLAYSGLYDQTFRKSMMEDWLHQLHLSGVQFKQHNPMTEYLSTADERLSWQENTLPVDDLCTENAIILKRFNRYPLIIDPSGRATEFLNRESKDRKLTVTSFLDDSFTKVLESSLRFGNPILIQDAEHLDPVLNHVLNKEYQKTGGRVLIQLGKQQIDFSPAFKLYLSTRDPSATFAPDICSRTTFVNFTVTQSSLQTQSLNEVLKSERPDVDERRSNLIKLQGEFKVHLRQLEKKLLQALNESRGNILDDDHVIETLETLKTEAAEISAKMSNTEGVMAEVEQITLQYNIIARSCSAVFAVLEQLHYLNHFYRFSLQYFLDIFHSVLRGNPHLANETNHNVRRDIIVKDLFVATFKRTALGLLQKDRITLAMLLAQASPYKMDKGLLDIILDERIEGKDVSIDQNTREEAFARAKKIPALKNKIDAVPEADWEKFFTEELAEDFVPKIWNDETEPNDRALMSLLLVKLFRLDRFVPAAERFVTLVFGSDLFDIVEDLKQTVDQVSAILPIALVSSPGFDASYKVDGLVERMRVRCTNIAMGSAEAEGSADKAIANAAQTGSWVLIKNVHLAPGWLQGVEKKMETLNPNPEFRLFLSMESSPKIPVNLLRASRVLMYEQPAGVRANMKDSMSSISTRSLKSPVERTRLYLLLSFLHAVVQERLRYAPNLGWKGFWEFNDADYECSAHVIDTWIDTAAHGRTNIAPSNIPWEMIRYLIVETYGGKIDDENDFKMLNQLVHTFLTPSAFDIGHKLVEVSHDAEDEQKDAATGGDLVVPSGTSLQEFMSWIQKLPEREPPTYLGLPANAEKLLLVGLGKSLIGNLKKVTDLLDEGEAIMAEASEAA.

Residues 1–13 show a composition bias toward pro residues; the sequence is MMDSVPSPPPQPS. Positions 1–20 are disordered; it reads MMDSVPSPPPQPSPDANGVA. The tract at residues 1-1904 is stem; that stretch reads MMDSVPSPPP…HIKMANAKLN (1904 aa). Coiled-coil stretches lie at residues 676–693, 1176–1215, 1327–1351, 1557–1574, and 1637–1668; these read ARQIERQLDQYMKKVEQV, IKFASRLGNRMREVYAELEKARKDLEGQAMTANSTAEAVR, LTHFEQRITKLQEESAMVAKAKEAL, YKEFEEEASSWEEKLNRV, and NIPNVQKSLERLAELLNKIQKALGEYLEKERV. 4 AAA regions span residues 1905–2130, 2202–2460, 2566–2815, and 2909–3179; these read YGFE…VLVS, EAIR…FTVA, EVNT…WVRG, and TFCE…QGKI. ATP is bound at residue 1943–1950; it reads GPAGTGKT. A coiled-coil region spans residues 2195 to 2218; the sequence is ASLEKLQEAIRRLAAERQLVVNDI. ATP-binding positions include 2240–2247, 2605–2612, and 2947–2954; these read GNSGSGKS, GPPGSGKT, and GVSGSGKT. Coiled coils occupy residues 3193–3296, 3423–3481, and 3778–3809; these read QYVK…LARA, PLRE…SRVQ, and VIETLETLKTEAAEISAKMSNTEGVMAEVEQI. Residues 3193–3481 are stalk; the sequence is QYVKLYNEKR…AIKAEMSRVQ (289 aa). AAA stretches follow at residues 3565-3794 and 4003-4215; these read LSTA…EISA and AERF…VIDT.

It belongs to the dynein heavy chain family. Consists of at least two heavy chains and a number of intermediate and light chains.

Its subcellular location is the cytoplasm. It localises to the cytoskeleton. Its function is as follows. Cytoplasmic dynein acts as a motor for the intracellular retrograde motility of vesicles and organelles along microtubules. Dynein has ATPase activity; the force-producing power stroke is thought to occur on release of ADP. Required to maintain uniform nuclear distribution in hyphae. The chain is Dynein heavy chain, cytoplasmic (ro-1) from Neurospora crassa (strain ATCC 24698 / 74-OR23-1A / CBS 708.71 / DSM 1257 / FGSC 987).